We begin with the raw amino-acid sequence, 92 residues long: Protein S100-B (92 aa).

Residue Ser2 is modified to N-acetylserine. 2 EF-hand domains span residues 13–48 and 49–84; these read DVFH…LEEI and KEQE…VTTA. His16 contributes to the Zn(2+) binding site. Residues Ser19 and Glu22 each coordinate Ca(2+). His26 is a binding site for Zn(2+). Lys27, Glu32, Asp62, Asp64, Asp66, Glu68, and Glu73 together coordinate Ca(2+). Residues His86 and His91 each coordinate Zn(2+).

Belongs to the S-100 family. As to quaternary structure, dimer of either two alpha chains, or two beta chains, or one alpha and one beta chain. The S100B dimer binds two molecules of STK38. Interacts with CACYBP in a calcium-dependent manner. Interacts with ATAD3A; this interaction probably occurs in the cytosol prior to ATAD3A mitochondrial targeting. Interacts with S100A6. The S100B dimer interacts with two molecules of CAPZA1. Interacts with AGER. Interacts with PPP5C (via TPR repeats); the interaction is calcium-dependent and modulates PPP5C activity. Interacts with TPPP; this interaction inhibits TPPP dimerization. Interacts with isoform CLSTN3beta of CLSTN3; interaction promotes secretion. Although predominant among the water-soluble brain proteins, S100 is also found in a variety of other tissues.

The protein localises to the cytoplasm. Its subcellular location is the nucleus. The protein resides in the secreted. Functionally, small zinc- and- and calcium-binding protein that is highly expressed in astrocytes and constitutes one of the most abundant soluble proteins in brain. Weakly binds calcium but binds zinc very tightly-distinct binding sites with different affinities exist for both ions on each monomer. Physiological concentrations of potassium ion antagonize the binding of both divalent cations, especially affecting high-affinity calcium-binding sites. Acts as a neurotrophic factor that promotes astrocytosis and axonal proliferation. Involved in innervation of thermogenic adipose tissue by acting as an adipocyte-derived neurotrophic factor that promotes sympathetic innervation of adipose tissue. Binds to and initiates the activation of STK38 by releasing autoinhibitory intramolecular interactions within the kinase. Interaction with AGER after myocardial infarction may play a role in myocyte apoptosis by activating ERK1/2 and p53/TP53 signaling. Could assist ATAD3A cytoplasmic processing, preventing aggregation and favoring mitochondrial localization. May mediate calcium-dependent regulation on many physiological processes by interacting with other proteins, such as TPR-containing proteins, and modulating their activity. The sequence is that of Protein S100-B from Rattus norvegicus (Rat).